The primary structure comprises 81 residues: Arminin 2a (81 aa).

Positions 1 to 18 (MKTVFAILFLAFIALTYA) are cleaved as a signal peptide. A propeptide spanning residues 19–57 (RSYEDVKEEIKNEVVKEILEDLEEESDELDDKSKEINDA) is cleaved from the precursor. Residue A78 is modified to Alanine amide.

It belongs to the arminin family. In terms of tissue distribution, expressed in entodermal epithelium along the body column.

The protein localises to the secreted. Its subcellular location is the target cell membrane. In terms of biological role, antimicrobial peptide with a broad-spectrum antimicrobial activity. Keeps its antibacterial activity under a wide range of salt concentrations that mimic physiological conditions of human blood, which is surprising, since Hydra is an obligate freshwater animal with nearly no salt tolerance. Does not affect red blood cells. The protein is Arminin 2a of Hydra vulgaris (Hydra).